Reading from the N-terminus, the 155-residue chain is Ribosomal RNA large subunit methyltransferase H (155 aa).

S-adenosyl-L-methionine-binding positions include Leu-72, Gly-103, and 122–127 (LSDLTL).

This sequence belongs to the RNA methyltransferase RlmH family. As to quaternary structure, homodimer.

It localises to the cytoplasm. It carries out the reaction pseudouridine(1915) in 23S rRNA + S-adenosyl-L-methionine = N(3)-methylpseudouridine(1915) in 23S rRNA + S-adenosyl-L-homocysteine + H(+). Functionally, specifically methylates the pseudouridine at position 1915 (m3Psi1915) in 23S rRNA. This chain is Ribosomal RNA large subunit methyltransferase H, found in Delftia acidovorans (strain DSM 14801 / SPH-1).